The sequence spans 222 residues: 6,7-dimethyl-8-ribityllumazine synthase, chloroplastic (222 aa).

Residues 1-66 constitute a chloroplast transit peptide; it reads MASFAASQTC…NRASFVVTNA (66 aa). 5-amino-6-(D-ribitylamino)uracil is bound by residues phenylalanine 89, 122–124, and 146–148; these read AYE and AVV. 151–152 is a binding site for (2S)-2-hydroxy-3-oxobutyl phosphate; the sequence is DT. The active-site Proton donor is the histidine 154. Phenylalanine 179 contributes to the 5-amino-6-(D-ribitylamino)uracil binding site. Arginine 193 contacts (2S)-2-hydroxy-3-oxobutyl phosphate.

It belongs to the DMRL synthase family. In terms of assembly, oligomer forming an icosahedral capsid.

Its subcellular location is the plastid. The protein resides in the chloroplast. The enzyme catalyses (2S)-2-hydroxy-3-oxobutyl phosphate + 5-amino-6-(D-ribitylamino)uracil = 6,7-dimethyl-8-(1-D-ribityl)lumazine + phosphate + 2 H2O + H(+). The protein operates within cofactor biosynthesis; riboflavin biosynthesis; riboflavin from 2-hydroxy-3-oxobutyl phosphate and 5-amino-6-(D-ribitylamino)uracil: step 1/2. Catalyzes the formation of 6,7-dimethyl-8-ribityllumazine by condensation of 5-amino-6-(D-ribitylamino)uracil with 3,4-dihydroxy-2-butanone 4-phosphate. This is the penultimate step in the biosynthesis of riboflavin. This is 6,7-dimethyl-8-ribityllumazine synthase, chloroplastic from Spinacia oleracea (Spinach).